Consider the following 307-residue polypeptide: Elongation factor Ts (307 aa).

The tract at residues 80–83 (TDFV) is involved in Mg(2+) ion dislocation from EF-Tu.

The protein belongs to the EF-Ts family.

It is found in the cytoplasm. In terms of biological role, associates with the EF-Tu.GDP complex and induces the exchange of GDP to GTP. It remains bound to the aminoacyl-tRNA.EF-Tu.GTP complex up to the GTP hydrolysis stage on the ribosome. The chain is Elongation factor Ts from Nitrobacter hamburgensis (strain DSM 10229 / NCIMB 13809 / X14).